The following is a 276-amino-acid chain: Rhamnulose-1-phosphate aldolase (276 aa).

Residue Glu-117 is part of the active site. Positions 141, 143, and 212 each coordinate Zn(2+).

This sequence belongs to the aldolase class II family. RhaD subfamily. Homotetramer. Zn(2+) serves as cofactor.

The protein localises to the cytoplasm. The catalysed reaction is L-rhamnulose 1-phosphate = (S)-lactaldehyde + dihydroxyacetone phosphate. It functions in the pathway carbohydrate degradation; L-rhamnose degradation; glycerone phosphate from L-rhamnose: step 3/3. Functionally, catalyzes the reversible cleavage of L-rhamnulose-1-phosphate to dihydroxyacetone phosphate (DHAP) and L-lactaldehyde. The polypeptide is Rhamnulose-1-phosphate aldolase (Enterobacter sp. (strain 638)).